Here is a 167-residue protein sequence, read N- to C-terminus: Signal recognition particle subunit SRP21 (167 aa).

S2 carries the post-translational modification N-acetylserine. Residues 123-139 (VEKSDPAAKKTATEPKQ) are compositionally biased toward basic and acidic residues. Positions 123 to 167 (VEKSDPAAKKTATEPKQKANAVQNNNGNSAASKKKKNKNKGKKKR) are disordered. Basic residues predominate over residues 154–167 (SKKKKNKNKGKKKR).

As to quaternary structure, fungal signal recognition particle (SRP) complex consists of a 7S RNA molecule (scR1) and at least six protein subunits: SRP72, SRP68, SRP54, SEC65, SRP21 and SRP14. At least SRP14, SRP21, SRP68 and SRP72 are proposed to get assembled together with scR1 RNA as a pre-SRP complex in the nucleolus which is exported to the cytoplasm.

It localises to the cytoplasm. It is found in the nucleus. Functionally, signal-recognition-particle (SRP) assembly has a crucial role in targeting secretory proteins to the rough endoplasmic reticulum (ER) membrane. SRP is required for the cotranslational protein translocation for ER import and preferentially recognizes strongly hydrophobic signal sequences. It is involved in targeting the nascent chain-ribosome (RNC) complex to the ER and is proposed to participate in the arrest of nascent chain elongation during membrane targeting. This chain is Signal recognition particle subunit SRP21 (SRP21), found in Saccharomyces cerevisiae (strain ATCC 204508 / S288c) (Baker's yeast).